Reading from the N-terminus, the 463-residue chain is Heterogeneous nuclear ribonucleoprotein K (463 aa).

N-acetylmethionine is present on Met-1. A disordered region spans residues 1 to 37; that stretch reads METEQPEETFPNTETNGEFGKRPAEDMEEEQAFKRSR. The segment at 1 to 276 is necessary for interaction with DDX1; that stretch reads METEQPEETF…GRGGRPMPPS (276 aa). Positions 19 to 37 are enriched in basic and acidic residues; sequence FGKRPAEDMEEEQAFKRSR. Lys-34 is modified (N6-acetyllysine; alternate). A Glycyl lysine isopeptide (Lys-Gly) (interchain with G-Cter in SUMO1); alternate cross-link involves residue Lys-34. Lys-34 is covalently cross-linked (Glycyl lysine isopeptide (Lys-Gly) (interchain with G-Cter in SUMO2); alternate). Residues 35-197 form an interaction with ASFV p30 region; that stretch reads RSRNTDEMVE…STDRVVLIGG (163 aa). Position 36 is a phosphoserine (Ser-36). The residue at position 39 (Thr-39) is a Phosphothreonine. The KH 1 domain occupies 42-104; it reads MVELRILLQS…ETIGEILKKI (63 aa). Residues Lys-52 and Lys-60 each participate in a glycyl lysine isopeptide (Lys-Gly) (interchain with G-Cter in SUMO2) cross-link. 2 consecutive repeat copies span residues 54–76 and 59–62. The tract at residues 54–421 is 2 X 22 AA approximate repeats; sequence AGAVIGKGGK…QIRHESGASI (368 aa). Residues 59-407 are 5 X 4 AA repeats of G-X-G-G; sequence GKGGKNIKAL…LAGSIIGKGG (349 aa). A phosphoserine mark is found at Ser-75 and Ser-116. The 66-residue stretch at 144–209 folds into the KH 2 domain; sequence DCELRLLIHQ…DRVVECIKII (66 aa). A Glycyl lysine isopeptide (Lys-Gly) (interchain with G-Cter in SUMO1); alternate cross-link involves residue Lys-163. Residue Lys-163 forms a Glycyl lysine isopeptide (Lys-Gly) (interchain with G-Cter in SUMO2); alternate linkage. The residue at position 198 (Lys-198) is an N6-acetyllysine. The interaction with ZIK1 stretch occupies residues 209–337; the sequence is ILDLISESPI…RPGDRYDGMV (129 aa). Residues Ser-214 and Ser-216 each carry the phosphoserine modification. Lys-219 is covalently cross-linked (Glycyl lysine isopeptide (Lys-Gly) (interchain with G-Cter in SUMO2); alternate). Lys-219 carries the N6-succinyllysine; alternate modification. The segment at 236–273 is RNA-binding RGG-box; the sequence is YGGFTMMFDDRRGRPVGFPMRGRGGFDRMPPGRGGRPM. Tandem repeats lie at residues 245-250, 257-260, and 267-270. The 2 X 6 AA approximate repeats stretch occupies residues 245–329; that stretch reads DRRGRPVGFP…LMAYDRRGRP (85 aa). A disordered region spans residues 250-329; sequence PVGFPMRGRG…LMAYDRRGRP (80 aa). Residues 252–266 are compositionally biased toward low complexity; sequence GFPMRGRGGFDRMPP. A compositionally biased stretch (basic and acidic residues) spans 276–285; that stretch reads SRRDYDDMSP. At Ser-284 the chain carries Phosphoserine. Residues 295-298 form a 3-4 repeat; the sequence is GRGG. Arg-316 is modified (omega-N-methylarginine). One copy of the 2-2 repeat lies at 324-329; sequence DRRGRP. Residue Arg-377 is modified to Omega-N-methylarginine. Residue Ser-379 is modified to Phosphoserine. Position 380 is a phosphotyrosine (Tyr-380). Residues 387 to 451 enclose the KH 3 domain; sequence IITTQVTIPK…DQIQNAQYLL (65 aa). 2 consecutive repeat copies span residues 399-421 and 404-407. The residue at position 405 (Lys-405) is an N6-acetyllysine; alternate. Residue Lys-405 forms a Glycyl lysine isopeptide (Lys-Gly) (interchain with G-Cter in SUMO2); alternate linkage. At Ser-420 the chain carries Phosphoserine. A Glycyl lysine isopeptide (Lys-Gly) (interchain with G-Cter in SUMO1); alternate cross-link involves residue Lys-422. Lys-422 is covalently cross-linked (Glycyl lysine isopeptide (Lys-Gly) (interchain with G-Cter in SUMO2); alternate). Lys-422 is covalently cross-linked (Glycyl lysine isopeptide (Lys-Gly) (interchain with G-Cter in SUMO); alternate).

Identified in the spliceosome C complex. Part of a transcription inhibitory ribonucleoprotein complex composed at least of the circular RNA circZNF827, ZNF827 and HNRNPL. Interacts with RBM42 and ZIK1. Interacts with BRDT. Interacts with ANKRD28. Interacts with ASFV p30 protein. Interacts with DDX1. Interacts with MDM2; this interaction leads to ubiquitination and proteasomal degradation. Interacts with p53/TP53. Interacts with IVNS1ABP (via BACK domain); the interaction is direct. Interacts with PPIA/CYPA. As to quaternary structure, (Microbial infection) Interacts with HCV core protein. Arg-296 and Arg-299 are dimethylated, probably to asymmetric dimethylarginine. Post-translationally, sumoylated by CBX4. Sumoylation is increased upon DNA damage, such as that produced by doxorubicin, etoposide, UV light and camptothecin, due to enhanced CBX4 phosphorylation by HIPK2 under these conditions. In terms of processing, ubiquitinated by MDM2. Doxorubicin treatment does not affect monoubiquitination, but slightly decreases HNRNPK poly-ubiquitination. O-glycosylated (O-GlcNAcylated), in a cell cycle-dependent manner.

The protein localises to the cytoplasm. The protein resides in the nucleus. It is found in the nucleoplasm. It localises to the cell projection. Its subcellular location is the podosome. In terms of biological role, one of the major pre-mRNA-binding proteins. Binds tenaciously to poly(C) sequences. Likely to play a role in the nuclear metabolism of hnRNAs, particularly for pre-mRNAs that contain cytidine-rich sequences. Can also bind poly(C) single-stranded DNA. Plays an important role in p53/TP53 response to DNA damage, acting at the level of both transcription activation and repression. When sumoylated, acts as a transcriptional coactivator of p53/TP53, playing a role in p21/CDKN1A and 14-3-3 sigma/SFN induction. As far as transcription repression is concerned, acts by interacting with long intergenic RNA p21 (lincRNA-p21), a non-coding RNA induced by p53/TP53. This interaction is necessary for the induction of apoptosis, but not cell cycle arrest. As part of a ribonucleoprotein complex composed at least of ZNF827, HNRNPL and the circular RNA circZNF827 that nucleates the complex on chromatin, may negatively regulate the transcription of genes involved in neuronal differentiation. This is Heterogeneous nuclear ribonucleoprotein K (HNRNPK) from Homo sapiens (Human).